Reading from the N-terminus, the 188-residue chain is PRA1 family protein 3 (188 aa).

At methionine 1 the chain carries N-acetylmethionine. Residues 1-35 are Cytoplasmic-facing; the sequence is MDVNLAPLRAWDDFFPGSDRFARPDFRDISKWNNR. The next 2 membrane-spanning stretches (helical) occupy residues 36 to 56 and 57 to 77; these read VVSN…MMIS and VVGF…VLVF. The Cytoplasmic segment spans residues 78-92; sequence TGFVWAAHNKDILRR. 2 helical membrane passes run 93 to 113 and 115 to 135; these read MKKQ…YFLI and MFGG…LMFI. Positions 103-117 are required for homodimer formation and heterodimer formation with ARL6IP1; the sequence is MVVMLASYFLISMFG. Topologically, residues 136-188 are cytoplasmic; that stretch reads HASLRLRNLKNKLENKMEGIGLKKTPMGIILDALEQQEDSINKFADYISKARE. The targeting to endoplasmic reticulum membrane stretch occupies residues 136 to 188; sequence HASLRLRNLKNKLENKMEGIGLKKTPMGIILDALEQQEDSINKFADYISKARE.

It belongs to the PRA1 family. Homodimer. Heterodimer with ARL6IP1. Forms multimers. Interacts with ARL6. Interacts with prenylated RAB1A and RAB3A. Interacts with SLC1A1/EAAC1. Interacts with RTN2 (via first transmembrane domain). Does not interact with VAMP1, VAMP2 or VAMP3. In terms of tissue distribution, ubiquitous. Most abundant in heart and brain. In the embryonic brain cortex, expressed in neurons and astrocytes.

It is found in the endoplasmic reticulum membrane. It localises to the cell membrane. The protein localises to the cytoplasm. Its subcellular location is the cytoskeleton. Functionally, regulates intracellular concentrations of taurine and glutamate. Negatively modulates SLC1A1/EAAC1 glutamate transport activity by decreasing its affinity for glutamate in a PKC activity-dependent manner. Plays a role in the retention of SLC1A1/EAAC1 in the endoplasmic reticulum. This is PRA1 family protein 3 (Arl6ip5) from Rattus norvegicus (Rat).